We begin with the raw amino-acid sequence, 157 residues long: Phosphomannomutase (157 aa).

The Phosphoserine intermediate role is filled by Ser-98. Ser-98 lines the Mg(2+) pocket.

Belongs to the phosphohexose mutase family. The cofactor is Mg(2+).

It carries out the reaction alpha-D-mannose 1-phosphate = D-mannose 6-phosphate. Its pathway is nucleotide-sugar biosynthesis; GDP-alpha-D-mannose biosynthesis; alpha-D-mannose 1-phosphate from D-fructose 6-phosphate: step 2/2. It functions in the pathway capsule biogenesis; capsule polysaccharide biosynthesis. Its function is as follows. Involved in the biosynthesis of the K2 capsular polysaccharide biosynthesis. In Klebsiella pneumoniae, this protein is Phosphomannomutase (manB).